The primary structure comprises 303 residues: D-alanine--D-alanine ligase (303 aa).

An ATP-grasp domain is found at 100–295 (KQLLRRHGIL…FPALIARLIE (196 aa)). 127–180 (GLGYPLFVKPNTGGSSLCLSRVTQPEGLAPALEAVFAHCGEAIVEPAIPGVEVT) is a binding site for ATP. Residues Asp-249, Glu-262, and Asn-264 each contribute to the Mg(2+) site.

It belongs to the D-alanine--D-alanine ligase family. Requires Mg(2+) as cofactor. The cofactor is Mn(2+).

The protein localises to the cytoplasm. It carries out the reaction 2 D-alanine + ATP = D-alanyl-D-alanine + ADP + phosphate + H(+). Its pathway is cell wall biogenesis; peptidoglycan biosynthesis. Functionally, cell wall formation. This Nitratidesulfovibrio vulgaris (strain DP4) (Desulfovibrio vulgaris) protein is D-alanine--D-alanine ligase.